A 121-amino-acid chain; its full sequence is Small ribosomal subunit protein uS12 (121 aa).

Residues 1–25 are disordered; sequence MPTINQLVRKNRKQKKSQSKSPVLE. A compositionally biased stretch (basic residues) spans 9-18; that stretch reads RKNRKQKKSQ. 3-methylthioaspartic acid is present on Asp89.

The protein belongs to the universal ribosomal protein uS12 family. Part of the 30S ribosomal subunit. Contacts proteins S8 and S17. May interact with IF1 in the 30S initiation complex.

Functionally, with S4 and S5 plays an important role in translational accuracy. Its function is as follows. Interacts with and stabilizes bases of the 16S rRNA that are involved in tRNA selection in the A site and with the mRNA backbone. Located at the interface of the 30S and 50S subunits, it traverses the body of the 30S subunit contacting proteins on the other side and probably holding the rRNA structure together. The combined cluster of proteins S8, S12 and S17 appears to hold together the shoulder and platform of the 30S subunit. The protein is Small ribosomal subunit protein uS12 of Rhodopirellula baltica (strain DSM 10527 / NCIMB 13988 / SH1).